The primary structure comprises 506 residues: ATP synthase subunit alpha, chloroplastic (506 aa).

Position 170–177 (170–177) interacts with ATP; it reads GDRQTGKT.

The protein belongs to the ATPase alpha/beta chains family. In terms of assembly, F-type ATPases have 2 components, CF(1) - the catalytic core - and CF(0) - the membrane proton channel. CF(1) has five subunits: alpha(3), beta(3), gamma(1), delta(1), epsilon(1). CF(0) has four main subunits: a, b, b' and c.

Its subcellular location is the plastid. It localises to the chloroplast thylakoid membrane. It carries out the reaction ATP + H2O + 4 H(+)(in) = ADP + phosphate + 5 H(+)(out). Functionally, produces ATP from ADP in the presence of a proton gradient across the membrane. The alpha chain is a regulatory subunit. The protein is ATP synthase subunit alpha, chloroplastic of Chlorokybus atmophyticus (Soil alga).